The chain runs to 79 residues: MSRLRNSAQLQLSKKESLGDNGGALNTTRSSRQKQGKYGFTRKCGRLVKEQRARFYIMRRCVVMLICWTDHNNNNSDHS.

The segment covering 1 to 12 (MSRLRNSAQLQL) has biased composition (polar residues). Residues 1–37 (MSRLRNSAQLQLSKKESLGDNGGALNTTRSSRQKQGK) form a disordered region. N-linked (GlcNAc...) asparagine glycosylation is present at asparagine 26. The interval 39–70 (GFTRKCGRLVKEQRARFYIMRRCVVMLICWTD) is required for DVL/RTFL small polypeptide activity. The chain crosses the membrane as a helical span at residues 55-71 (FYIMRRCVVMLICWTDH). N-linked (GlcNAc...) asparagine glycosylation is present at asparagine 74.

It belongs to the DVL/RTFL small polypeptides family.

The protein localises to the cell membrane. Its function is as follows. Small polypeptide acting as a regulatory molecule which coordinates cellular responses required for differentiation, growth and development, probably by restricting polar cell proliferation in lateral organs and coordinating socket cell recruitment and differentiation at trichome sites. The polypeptide is Small polypeptide DEVIL 8 (Arabidopsis thaliana (Mouse-ear cress)).